The chain runs to 131 residues: D-ribose pyranase (131 aa).

His20 (proton donor) is an active-site residue. Substrate is bound by residues Asp28, His98, and 120 to 122 (YAN).

This sequence belongs to the RbsD / FucU family. RbsD subfamily. In terms of assembly, homodecamer.

The protein localises to the cytoplasm. It carries out the reaction beta-D-ribopyranose = beta-D-ribofuranose. It participates in carbohydrate metabolism; D-ribose degradation; D-ribose 5-phosphate from beta-D-ribopyranose: step 1/2. In terms of biological role, catalyzes the interconversion of beta-pyran and beta-furan forms of D-ribose. The chain is D-ribose pyranase from Bacillus licheniformis (strain ATCC 14580 / DSM 13 / JCM 2505 / CCUG 7422 / NBRC 12200 / NCIMB 9375 / NCTC 10341 / NRRL NRS-1264 / Gibson 46).